The sequence spans 455 residues: Probable glycine dehydrogenase (decarboxylating) subunit 1 (455 aa).

It belongs to the GcvP family. N-terminal subunit subfamily. As to quaternary structure, the glycine cleavage system is composed of four proteins: P, T, L and H. In this organism, the P 'protein' is a heterodimer of two subunits.

It catalyses the reaction N(6)-[(R)-lipoyl]-L-lysyl-[glycine-cleavage complex H protein] + glycine + H(+) = N(6)-[(R)-S(8)-aminomethyldihydrolipoyl]-L-lysyl-[glycine-cleavage complex H protein] + CO2. The glycine cleavage system catalyzes the degradation of glycine. The P protein binds the alpha-amino group of glycine through its pyridoxal phosphate cofactor; CO(2) is released and the remaining methylamine moiety is then transferred to the lipoamide cofactor of the H protein. The sequence is that of Probable glycine dehydrogenase (decarboxylating) subunit 1 from Francisella tularensis subsp. novicida (strain U112).